The primary structure comprises 520 residues: GMP synthase [glutamine-hydrolyzing] (520 aa).

A Glutamine amidotransferase type-1 domain is found at 9-202 (SVLIIDFGSQ…VHNIAGITGD (194 aa)). The Nucleophile role is filled by cysteine 86. Active-site residues include histidine 176 and glutamate 178. A GMPS ATP-PPase domain is found at 203–395 (WSMSAYRAKA…LGLPDSFIGR (193 aa)). 230-236 (SGGVDSS) is a binding site for ATP.

Homodimer.

The enzyme catalyses XMP + L-glutamine + ATP + H2O = GMP + L-glutamate + AMP + diphosphate + 2 H(+). It participates in purine metabolism; GMP biosynthesis; GMP from XMP (L-Gln route): step 1/1. In terms of biological role, catalyzes the synthesis of GMP from XMP. This is GMP synthase [glutamine-hydrolyzing] from Allorhizobium ampelinum (strain ATCC BAA-846 / DSM 112012 / S4) (Agrobacterium vitis (strain S4)).